The chain runs to 650 residues: Chaperone protein DnaK (650 aa).

Thr-200 is modified (phosphothreonine; by autocatalysis). The disordered stretch occupies residues 614–635; the sequence is AGAAGAAGAAEGAAHAGGAQQA.

The protein belongs to the heat shock protein 70 family.

Acts as a chaperone. The sequence is that of Chaperone protein DnaK from Burkholderia lata (strain ATCC 17760 / DSM 23089 / LMG 22485 / NCIMB 9086 / R18194 / 383).